The primary structure comprises 584 residues: MSQVIEPQLDRTTYYSILGLTSNATSSEVHKSYLKLARLLHPDKTKSDKSEELFKAVVHAHSILTDEDQKLRYDRDLKIKGLHTYQPKKNCHIFKTKAKESQGASPTLGQSEAYHRQNKPYEQQPYGFGVGKKMTSSSKSKVPIFKSFNLKSYQRNHYYSSKKERKHGSPDIDSLFHETNGASKVRMTDAGKMDTNSQFQEIWEILGKNVYTHKSYSEDPNSCLGSALSDHEEEEEEAGKQQQQQQQQQQQQQHYGMTSKSSSPDEEQKDNKESKRESRVSPEENGEEETGHKQFKLPKTSTFSSGSHDSNLQSPFYNHEYRHYARSKFECKNQFRKSVSPIKEIPATTSTNEGWNILRDIIEKLNISNVDDRNKDLLFRRDEIGDKNHSDSIDIENLSIKEPKGMKRRKKDDISLEELFQSLPREKDYFMMDAINDSLESINLFKKPKTTQSHEQGGTFAQAESNRAKFKPLLEQCGITPEILDLQIPEIPEFDAVADLETLKLNVQLFNNQCNKLKETIHQVSLQRLRADTQFSDMLTQKQSIMVWKTYLEFDKSLMDKLNILQERQMQVIKIFSERCDGKV.

Residues 13–77 (TYYSILGLTS…DQKLRYDRDL (65 aa)) form the J domain. Residues 216–312 (YSEDPNSCLG…FSSGSHDSNL (97 aa)) are disordered. Ser-229 is modified (phosphoserine). Positions 241-253 (QQQQQQQQQQQQQ) are enriched in low complexity. Residues 269 to 282 (KDNKESKRESRVSP) are compositionally biased toward basic and acidic residues. Polar residues predominate over residues 299–312 (KTSTFSSGSHDSNL).

The protein resides in the cytoplasm. It localises to the nucleus. The chain is J protein JJJ2 (JJJ2) from Saccharomyces cerevisiae (strain YJM789) (Baker's yeast).